Consider the following 135-residue polypeptide: Large ribosomal subunit protein uL16c (135 aa).

The protein belongs to the universal ribosomal protein uL16 family. Part of the 50S ribosomal subunit.

The protein localises to the plastid. It is found in the chloroplast. The polypeptide is Large ribosomal subunit protein uL16c (Euglena gracilis).